The following is a 681-amino-acid chain: DNA ligase (681 aa).

Residues 45–49 (DFDFD), 94–95 (SL), and Glu-120 contribute to the NAD(+) site. Lys-122 serves as the catalytic N6-AMP-lysine intermediate. NAD(+)-binding residues include Arg-143, Glu-177, Lys-289, and Lys-313. Zn(2+) contacts are provided by Cys-403, Cys-406, Cys-421, and Cys-426. Residues 593–681 (ADQQPFAGQS…SLKIDFKNLI (89 aa)) enclose the BRCT domain.

The protein belongs to the NAD-dependent DNA ligase family. LigA subfamily. Requires Mg(2+) as cofactor. Mn(2+) serves as cofactor.

It catalyses the reaction NAD(+) + (deoxyribonucleotide)n-3'-hydroxyl + 5'-phospho-(deoxyribonucleotide)m = (deoxyribonucleotide)n+m + AMP + beta-nicotinamide D-nucleotide.. DNA ligase that catalyzes the formation of phosphodiester linkages between 5'-phosphoryl and 3'-hydroxyl groups in double-stranded DNA using NAD as a coenzyme and as the energy source for the reaction. It is essential for DNA replication and repair of damaged DNA. This Leptospira interrogans serogroup Icterohaemorrhagiae serovar copenhageni (strain Fiocruz L1-130) protein is DNA ligase.